Consider the following 401-residue polypeptide: Calreticulin (401 aa).

An N-terminal signal peptide occupies residues 1–18 (MRKELWLGLLLSSQAVLS). A disulfide bridge links cysteine 103 with cysteine 134. An alpha-D-glucoside-binding residues include tyrosine 107, lysine 109, tyrosine 125, and aspartate 132. 7 tandem repeats follow at residues 187–198 (KESGTLEEDWEI), 206–217 (DPEDKKPADWVD), 223–234 (DPEDKKPEDWDK), 241–252 (DPDATQPDDWDE), 256–266 (GKWEAPMISNP), 270–280 (GEWKAKKIPNP), and 284–294 (GVWKPRDIPNP). Residues 187 to 252 (KESGTLEEDW…DATQPDDWDE (66 aa)) are 4 X approximate repeats. 2 stretches are compositionally biased toward basic and acidic residues: residues 199 to 214 (LKPKTIPDPEDKKPAD) and 224 to 236 (PEDKKPEDWDKEP). Residues 199–263 (LKPKTIPDPE…EDGKWEAPMI (65 aa)) are disordered. Residues 246–256 (QPDDWDEEEDG) are compositionally biased toward acidic residues. A 3 X approximate repeats region spans residues 256–294 (GKWEAPMISNPKYKGEWKAKKIPNPAYKGVWKPRDIPNP). Aspartate 314 contacts an alpha-D-glucoside. The segment at 341 to 401 (DQTNGATKDA…EEEDDKKDEL (61 aa)) is disordered. Residues 348–381 (KDAEKKAFDSAEADKRKKEEDERKKQEEEEKKTA) are compositionally biased toward basic and acidic residues. Acidic residues predominate over residues 382–401 (EEDEDDDDEEEEEDDKKDEL). The Prevents secretion from ER signature appears at 398 to 401 (KDEL).

This sequence belongs to the calreticulin family.

It localises to the endoplasmic reticulum lumen. Functionally, molecular calcium-binding chaperone promoting folding, oligomeric assembly and quality control in the ER via the calreticulin/calnexin cycle. This lectin may interact transiently with almost all of the monoglucosylated glycoproteins that are synthesized in the ER. In Euglena gracilis, this protein is Calreticulin.